A 51-amino-acid polypeptide reads, in one-letter code: Sperm protamine P1 (51 aa).

This sequence belongs to the protamine P1 family. As to expression, testis.

It is found in the nucleus. The protein localises to the chromosome. Its function is as follows. Protamines substitute for histones in the chromatin of sperm during the haploid phase of spermatogenesis. They compact sperm DNA into a highly condensed, stable and inactive complex. The protein is Sperm protamine P1 (PRM1) of Trachypithecus francoisi (Francois' leaf monkey).